A 720-amino-acid polypeptide reads, in one-letter code: Portal protein (720 aa).

Belongs to the p22likevirus portal protein family. As to quaternary structure, homododecamer.

The protein resides in the virion. Forms the portal vertex of the capsid. This portal plays critical roles in head assembly, genome packaging, neck/tail attachment, and genome ejection. Procapsid assembly may initiate with a nucleation complex composed of portal and scaffolding proteins. The portal protein multimerizes as a single ring-shaped homododecamer arranged around a central channel. This chain is Portal protein (19), found in Acyrthosiphon pisum secondary endosymbiont phage 1 (Bacteriophage APSE-1).